Reading from the N-terminus, the 259-residue chain is Merozoite surface protein CMZ-8 (259 aa).

Positions 1–108 are enriched in pro residues; the sequence is PLPFSPPSTP…STPVSPPSSP (108 aa). Disordered regions lie at residues 1 to 127 and 174 to 203; these read PLPF…STSE and RPGS…RHKG. Repeat copies occupy residues 5–11, 12–18, 19–25, 26–32, 33–39, 40–46, 47–53, 54–60, 61–67, 68–74, 75–81, 82–88, 89–95, 96–102, and 103–109. Positions 5–109 are 15 X 7 AA repeats of S-P-P-S-T-P-V; that stretch reads SPPSTPVSPP…TPVSPPSSPA (105 aa). Residues 184 to 203 show a composition bias toward basic residues; it reads HCTRSTRSSRRMSRRHRHKG.

This chain is Merozoite surface protein CMZ-8, found in Eimeria acervulina (Coccidian parasite).